A 310-amino-acid polypeptide reads, in one-letter code: Ribosomal RNA small subunit methyltransferase H (310 aa).

Residues 32-34, aspartate 52, phenylalanine 79, aspartate 100, and glutamine 107 each bind S-adenosyl-L-methionine; that span reads GGH.

It belongs to the methyltransferase superfamily. RsmH family.

The protein resides in the cytoplasm. The catalysed reaction is cytidine(1402) in 16S rRNA + S-adenosyl-L-methionine = N(4)-methylcytidine(1402) in 16S rRNA + S-adenosyl-L-homocysteine + H(+). Its function is as follows. Specifically methylates the N4 position of cytidine in position 1402 (C1402) of 16S rRNA. The protein is Ribosomal RNA small subunit methyltransferase H of Bacillus thuringiensis subsp. konkukian (strain 97-27).